The primary structure comprises 291 residues: Pituitary-specific positive transcription factor 1 (291 aa).

Positions 5 to 13 (AFTSADTFI) match the 9aaTAD motif. The region spanning 124 to 198 (MDSPEIRELE…ILSKWLEEAE (75 aa)) is the POU-specific domain. The homeobox DNA-binding region spans 214–273 (KRKRRTTISIAAKDALERHFGEQNKPSSQEIMRMAEELNLEKEVVRVWFCNRRQREKRVK).

Belongs to the POU transcription factor family. Class-1 subfamily. Interacts with PITX1. Interacts with LHX3. Interacts with ELK1.

The protein resides in the nucleus. Functionally, transcription factor involved in the specification of the lactotrope, somatotrope, and thyrotrope phenotypes in the developing anterior pituitary. Specifically binds to the consensus sequence 5'-TAAAT-3'. Activates growth hormone and prolactin genes. The sequence is that of Pituitary-specific positive transcription factor 1 (POU1F1) from Homo sapiens (Human).